Reading from the N-terminus, the 293-residue chain is Elongation factor Ts (293 aa).

Residues 80-83 (TDFV) form an involved in Mg(2+) ion dislocation from EF-Tu region.

Belongs to the EF-Ts family.

Its subcellular location is the cytoplasm. Its function is as follows. Associates with the EF-Tu.GDP complex and induces the exchange of GDP to GTP. It remains bound to the aminoacyl-tRNA.EF-Tu.GTP complex up to the GTP hydrolysis stage on the ribosome. The protein is Elongation factor Ts of Burkholderia cenocepacia (strain HI2424).